A 95-amino-acid chain; its full sequence is CRISPR-associated endoribonuclease Cas2 1 (95 aa).

Asp-8 is a Mg(2+) binding site.

The protein belongs to the CRISPR-associated endoribonuclease Cas2 protein family. Homodimer, forms a heterotetramer with a Cas1 homodimer. Requires Mg(2+) as cofactor.

In terms of biological role, CRISPR (clustered regularly interspaced short palindromic repeat), is an adaptive immune system that provides protection against mobile genetic elements (viruses, transposable elements and conjugative plasmids). CRISPR clusters contain sequences complementary to antecedent mobile elements and target invading nucleic acids. CRISPR clusters are transcribed and processed into CRISPR RNA (crRNA). Functions as a ssRNA-specific endoribonuclease. Involved in the integration of spacer DNA into the CRISPR cassette. This is CRISPR-associated endoribonuclease Cas2 1 from Pyrobaculum aerophilum (strain ATCC 51768 / DSM 7523 / JCM 9630 / CIP 104966 / NBRC 100827 / IM2).